Consider the following 752-residue polypeptide: Probable beta-glucosidase D (752 aa).

The first 18 residues, Met1–Ala18, serve as a signal peptide directing secretion. N-linked (GlcNAc...) asparagine glycans are attached at residues Asn187 and Asn237. Asp265 is an active-site residue. Residues Asn299, Asn343, Asn441, Asn510, Asn532, Asn571, Asn586, Asn638, Asn661, and Asn743 are each glycosylated (N-linked (GlcNAc...) asparagine).

Belongs to the glycosyl hydrolase 3 family.

Its subcellular location is the secreted. It catalyses the reaction Hydrolysis of terminal, non-reducing beta-D-glucosyl residues with release of beta-D-glucose.. The protein operates within glycan metabolism; cellulose degradation. Beta-glucosidases are one of a number of cellulolytic enzymes involved in the degradation of cellulosic biomass. Catalyzes the last step releasing glucose from the inhibitory cellobiose. The chain is Probable beta-glucosidase D (bglD) from Aspergillus oryzae (strain ATCC 42149 / RIB 40) (Yellow koji mold).